Reading from the N-terminus, the 430-residue chain is Serine--tRNA ligase (430 aa).

Residues 41–60 are disordered; it reads QSRTQDLQNERNVRSKSIGK. 236 to 238 lines the L-serine pocket; the sequence is TAE. 267–269 serves as a coordination point for ATP; that stretch reads RSE. Residue glutamate 290 participates in L-serine binding. 354-357 contacts ATP; it reads EISS. Serine 390 lines the L-serine pocket.

This sequence belongs to the class-II aminoacyl-tRNA synthetase family. Type-1 seryl-tRNA synthetase subfamily. Homodimer. The tRNA molecule binds across the dimer.

The protein resides in the cytoplasm. The catalysed reaction is tRNA(Ser) + L-serine + ATP = L-seryl-tRNA(Ser) + AMP + diphosphate + H(+). It carries out the reaction tRNA(Sec) + L-serine + ATP = L-seryl-tRNA(Sec) + AMP + diphosphate + H(+). It participates in aminoacyl-tRNA biosynthesis; selenocysteinyl-tRNA(Sec) biosynthesis; L-seryl-tRNA(Sec) from L-serine and tRNA(Sec): step 1/1. Functionally, catalyzes the attachment of serine to tRNA(Ser). Is also able to aminoacylate tRNA(Sec) with serine, to form the misacylated tRNA L-seryl-tRNA(Sec), which will be further converted into selenocysteinyl-tRNA(Sec). This is Serine--tRNA ligase from Alteromonas mediterranea (strain DSM 17117 / CIP 110805 / LMG 28347 / Deep ecotype).